Consider the following 295-residue polypeptide: Foldase protein PrsA (295 aa).

A signal peptide spans 1 to 19 (MKKVLIGFASIAMAFTLAA). A lipid anchor (N-palmitoyl cysteine) is attached at Cys20. Residue Cys20 is the site of S-diacylglycerol cysteine attachment. Residues 136 to 229 (EPKVTVAQIL…YGYQVIKMIN (94 aa)) form the PpiC domain.

It belongs to the PrsA family.

The protein resides in the cell membrane. The enzyme catalyses [protein]-peptidylproline (omega=180) = [protein]-peptidylproline (omega=0). Functionally, plays a major role in protein secretion by helping the post-translocational extracellular folding of several secreted proteins. The sequence is that of Foldase protein PrsA from Pediococcus pentosaceus (strain ATCC 25745 / CCUG 21536 / LMG 10740 / 183-1w).